Reading from the N-terminus, the 272-residue chain is Type III pantothenate kinase (272 aa).

Position 6-13 (6-13 (NVNNTNTL)) interacts with ATP. 113–116 (GADR) lines the substrate pocket. The active-site Proton acceptor is the Asp-115. Asp-135 is a K(+) binding site. Position 138 (Thr-138) interacts with ATP. Thr-190 serves as a coordination point for substrate.

It belongs to the type III pantothenate kinase family. In terms of assembly, homodimer. NH4(+) is required as a cofactor. The cofactor is K(+).

Its subcellular location is the cytoplasm. The catalysed reaction is (R)-pantothenate + ATP = (R)-4'-phosphopantothenate + ADP + H(+). It functions in the pathway cofactor biosynthesis; coenzyme A biosynthesis; CoA from (R)-pantothenate: step 1/5. In terms of biological role, catalyzes the phosphorylation of pantothenate (Pan), the first step in CoA biosynthesis. This is Type III pantothenate kinase from Acidobacterium capsulatum (strain ATCC 51196 / DSM 11244 / BCRC 80197 / JCM 7670 / NBRC 15755 / NCIMB 13165 / 161).